The sequence spans 161 residues: V-type proton ATPase subunit c (161 aa).

The Lumenal portion of the chain corresponds to M1–Y9. Residues A10–G32 form a helical membrane-spanning segment. Topologically, residues T33–N54 are cytoplasmic. The helical transmembrane segment at T55–I75 threads the bilayer. The Lumenal portion of the chain corresponds to S76–Q91. A helical membrane pass occupies residues L92 to G113. The Cytoplasmic portion of the chain corresponds to D114–R125. A helical membrane pass occupies residues L126 to L151. Residues N152 to C161 lie on the Lumenal side of the membrane.

It belongs to the V-ATPase proteolipid subunit family. In terms of assembly, V-ATPase is a heteromultimeric enzyme composed of a peripheral catalytic V1 complex (components A to H) attached to an integral membrane V0 proton pore complex (components: a, c, c', c'', d, e, f and VOA1). The decameric c-ring forms the proton-conducting pore, and is composed of eight proteolipid subunits c, one subunit c' and one subunit c''.

The protein resides in the vacuole membrane. Proton-conducting pore forming subunit of the V0 complex of vacuolar(H+)-ATPase (V-ATPase), a multisubunit enzyme composed of a peripheral complex (V1) that hydrolyzes ATP and a membrane integral complex (V0) that translocates protons. V-ATPase is responsible for acidifying and maintaining the pH of intracellular compartments. The polypeptide is V-type proton ATPase subunit c (Schizosaccharomyces pombe (strain 972 / ATCC 24843) (Fission yeast)).